The primary structure comprises 175 residues: Gamma-crystallin B (175 aa).

2 Beta/gamma crystallin 'Greek key' domains span residues 2–40 (GKIT…RVES) and 41–83 (GCWM…CLIP). The tract at residues 84–88 (PHSGA) is connecting peptide. 2 Beta/gamma crystallin 'Greek key' domains span residues 89-129 (YRMK…NVLE) and 130-172 (GSWI…RRVM).

Belongs to the beta/gamma-crystallin family. Monomer.

Functionally, crystallins are the dominant structural components of the vertebrate eye lens. The protein is Gamma-crystallin B (CRYGB) of Homo sapiens (Human).